We begin with the raw amino-acid sequence, 257 residues long: Phosphonates import ATP-binding protein PhnC (257 aa).

An ABC transporter domain is found at 2-246 (IEFRNVSKVY…KFAEIYGDVA (245 aa)). Residue 35 to 42 (GLSGAGKS) participates in ATP binding.

It belongs to the ABC transporter superfamily. Phosphonates importer (TC 3.A.1.9.1) family. In terms of assembly, the complex is composed of two ATP-binding proteins (PhnC), two transmembrane proteins (PhnE) and a solute-binding protein (PhnD).

It localises to the cell membrane. It carries out the reaction phosphonate(out) + ATP + H2O = phosphonate(in) + ADP + phosphate + H(+). Its function is as follows. Part of the ABC transporter complex PhnCDE involved in phosphonates import. Responsible for energy coupling to the transport system. This is Phosphonates import ATP-binding protein PhnC from Bacillus cereus (strain ZK / E33L).